We begin with the raw amino-acid sequence, 146 residues long: Large-conductance mechanosensitive channel (146 aa).

Transmembrane regions (helical) follow at residues 21–41 (VGII…ADLI), 44–64 (IIGL…LGDG), and 83–103 (GSFI…FLLV).

This sequence belongs to the MscL family. In terms of assembly, homopentamer.

Its subcellular location is the cell inner membrane. Functionally, channel that opens in response to stretch forces in the membrane lipid bilayer. May participate in the regulation of osmotic pressure changes within the cell. This Cereibacter sphaeroides (strain ATCC 17023 / DSM 158 / JCM 6121 / CCUG 31486 / LMG 2827 / NBRC 12203 / NCIMB 8253 / ATH 2.4.1.) (Rhodobacter sphaeroides) protein is Large-conductance mechanosensitive channel.